The primary structure comprises 261 residues: Putative carbamate hydrolase RutD (261 aa).

An AB hydrolase-1 domain is found at 14–119; it reads PTILLSSGLG…LINAWSKADP (106 aa).

It belongs to the AB hydrolase superfamily. Hydrolase RutD family.

The catalysed reaction is carbamate + 2 H(+) = NH4(+) + CO2. Involved in pyrimidine catabolism. May facilitate the hydrolysis of carbamate, a reaction that can also occur spontaneously. The protein is Putative carbamate hydrolase RutD of Agrobacterium fabrum (strain C58 / ATCC 33970) (Agrobacterium tumefaciens (strain C58)).